Reading from the N-terminus, the 235-residue chain is Phosphoribosylaminoimidazole-succinocarboxamide synthase (235 aa).

Belongs to the SAICAR synthetase family.

The catalysed reaction is 5-amino-1-(5-phospho-D-ribosyl)imidazole-4-carboxylate + L-aspartate + ATP = (2S)-2-[5-amino-1-(5-phospho-beta-D-ribosyl)imidazole-4-carboxamido]succinate + ADP + phosphate + 2 H(+). The protein operates within purine metabolism; IMP biosynthesis via de novo pathway; 5-amino-1-(5-phospho-D-ribosyl)imidazole-4-carboxamide from 5-amino-1-(5-phospho-D-ribosyl)imidazole-4-carboxylate: step 1/2. The polypeptide is Phosphoribosylaminoimidazole-succinocarboxamide synthase (Clostridium novyi (strain NT)).